Here is a 79-residue protein sequence, read N- to C-terminus: Conotoxin Leo-O1 (79 aa).

The first 22 residues, 1-22, serve as a signal peptide directing secretion; sequence MKLTCMMLVAVLFLTAWTFVTA. Positions 23-51 are excised as a propeptide; sequence NVSRNGLENLFPEERHEMMNPEAAKLNNR. Disulfide bonds link cysteine 53–cysteine 70, cysteine 60–cysteine 74, and cysteine 69–cysteine 78.

This sequence belongs to the conotoxin O1 superfamily. Expressed by the venom duct.

The protein resides in the secreted. The protein is Conotoxin Leo-O1 of Conus leopardus (Leopard cone).